We begin with the raw amino-acid sequence, 270 residues long: Tetraspanin-14 (270 aa).

The Cytoplasmic portion of the chain corresponds to 1–17; sequence MHYYRYSNAKVSCWYKY. A helical membrane pass occupies residues 18-38; the sequence is LLFSYNIIFWLAGVVFLGVGL. Over 39–61 the chain is Extracellular; that stretch reads WAWSEKGVLSDLTKVTRMHGIDP. The helical transmembrane segment at 62–82 threads the bilayer; sequence VVLVLMVGVVMFTLGFAGCVG. At 83–92 the chain is on the cytoplasmic side; the sequence is ALRENICLLN. Residues 93 to 113 traverse the membrane as a helical segment; that stretch reads FFCGTIVLIFFLELAVAVLAF. Residues 114–232 lie on the Extracellular side of the membrane; that stretch reads LFQDWVRDRF…QALESWLPRN (119 aa). Residues 114 to 232 are necessary and sufficient for interaction with ADAM10; it reads LFQDWVRDRF…QALESWLPRN (119 aa). 4 disulfide bridges follow: C153–C221, C154–C186, C170–C180, and C187–C200. N-linked (GlcNAc...) asparagine glycosylation occurs at N169. Residues 233–253 traverse the membrane as a helical segment; it reads IYIVAGVFIAISLLQIFGIFL. Over 254–270 the chain is Cytoplasmic; it reads ARTLISDIEAVKAGHHF.

The protein belongs to the tetraspanin (TM4SF) family. Interacts with ADAM10; the interaction promotes ADAM10 maturation and cell surface expression.

It localises to the cell membrane. Its function is as follows. Part of TspanC8 subgroup, composed of 6 members that interact with the transmembrane metalloprotease ADAM10. This interaction is required for ADAM10 exit from the endoplasmic reticulum and for enzymatic maturation and trafficking to the cell surface as well as substrate specificity. Different TspanC8/ADAM10 complexes have distinct substrates. Negatively regulates ADAM10-mediated cleavage of GP6. Promotes ADAM10-mediated cleavage of CDH5. The protein is Tetraspanin-14 of Homo sapiens (Human).